A 353-amino-acid chain; its full sequence is (3aS,4S,5R,7aS)-5-hydroxy-7a-methyl-1-oxo-octahydro-1H-indene-4-carboxyl-CoA dehydrogenase (353 aa).

Residues G22–G24, A171–G173, and G194–T195 contribute to the FMN site.

It belongs to the nitronate monooxygenase family.

It catalyses the reaction (3aS,4S,5R,7aS)-5-hydroxy-7a-methyl-1-oxo-octahydro-1H-indene-4-carboxyl-CoA + NAD(+) = (5R,7aS)-5-hydroxy-7a-methyl-1-oxo-2,3,5,6,7,7a-hexahydro-1H-indene-carboxyl-CoA + NADH + H(+). Its pathway is steroid metabolism; cholesterol degradation. In terms of biological role, involved in the final steps of cholesterol and steroid degradation. Probably catalyzes the introduction of a double bound into the C ring of 5OH-HIC-CoA, leading to the formation of (5R,7aS)-5-hydroxy-7a-methyl-1-oxo-3,5,6,7-tetrahydro-2H-indene-4-carboxyl-CoA. The chain is (3aS,4S,5R,7aS)-5-hydroxy-7a-methyl-1-oxo-octahydro-1H-indene-4-carboxyl-CoA dehydrogenase from Rhodococcus jostii (strain RHA1).